Reading from the N-terminus, the 478-residue chain is Calcium/calmodulin-dependent protein kinase type II subunit alpha (478 aa).

Tyrosine 13 is subject to Phosphotyrosine. The Protein kinase domain occupies 13–271 (YQLFEELGKG…AAEALKHPWI (259 aa)). Residues 19–27 (LGKGAFSVV) and lysine 42 each bind ATP. The active-site Proton acceptor is aspartate 135. Serine 257 is modified (phosphoserine). At threonine 286 the chain carries Phosphothreonine; by autocatalysis. Positions 290–300 (LKKFNARRKLK) are calmodulin-binding. Residues 310–320 (TRNFSGGKSGG) are interaction with BAALC. A disordered region spans residues 314–341 (SGGKSGGNKKNDGVKESSESTNTTIEDE). A compositionally biased stretch (basic and acidic residues) spans 322 to 331 (KKNDGVKESS). 3 positions are modified to phosphoserine: serine 330, serine 331, and serine 333. Residues threonine 336 and threonine 337 each carry the phosphothreonine modification. Serine 404 bears the Phosphoserine mark.

It belongs to the protein kinase superfamily. CAMK Ser/Thr protein kinase family. CaMK subfamily. In terms of assembly, there are 4 genes encoding calcium/calmodulin-dependent protein kinase type II chains: CAMK2A, CAMK2B, CAMK2G and CAMK2D. The corresponding proteins assemble into homo- or heteromultimeric holoenzymes composed of 12 subunits with two hexameric rings stacked one on top of the other. Interacts with BAALC. Interacts with MPDZ. Interacts with SYN1. Interacts with CAMK2N2. Interacts with SYNGAP1. Interacts with SYNPO2. Interacts with SHANK3. Interacts with GRIN2B. Interacts with CACNB2. Interacts with LRRC7. Interacts with GRM5. Interacts with DAGLA (via C-terminal); this interaction is enhanced by autophosphorylation of CAMK2A at Thr-286. Interacts with CAMK2N1; this interaction requires CAMK2A activation by Ca(2+). Mg(2+) is required as a cofactor. Autophosphorylation of Thr-286 following activation by Ca(2+)/calmodulin. Phosphorylation of Thr-286 locks the kinase into an activated state. Post-translationally, palmitoylated. Probably palmitoylated by ZDHHC3 and ZDHHC7. Expressed in brain. As to expression, expressed in skeletal muscle.

It is found in the cytoplasm. It localises to the synapse. Its subcellular location is the postsynaptic density. The protein resides in the cell projection. The protein localises to the dendritic spine. It is found in the dendrite. The enzyme catalyses L-seryl-[protein] + ATP = O-phospho-L-seryl-[protein] + ADP + H(+). The catalysed reaction is L-threonyl-[protein] + ATP = O-phospho-L-threonyl-[protein] + ADP + H(+). Its activity is regulated as follows. Activated by Ca(2+)/calmodulin. Binding of calmodulin results in conformational change that relieves intrasteric autoinhibition and allows autophosphorylation of Thr-286 which turns the kinase in a constitutively active form and confers to the kinase a Ca(2+)-independent activity. In terms of biological role, calcium/calmodulin-dependent protein kinase that functions autonomously after Ca(2+)/calmodulin-binding and autophosphorylation, and is involved in various processes, such as synaptic plasticity, neurotransmitter release and long-term potentiation. Member of the NMDAR signaling complex in excitatory synapses, it regulates NMDAR-dependent potentiation of the AMPAR and therefore excitatory synaptic transmission. Regulates dendritic spine development. Also regulates the migration of developing neurons. Phosphorylates the transcription factor FOXO3 to activate its transcriptional activity. Phosphorylates the transcription factor ETS1 in response to calcium signaling, thereby decreasing ETS1 affinity for DNA. In response to interferon-gamma (IFN-gamma) stimulation, catalyzes phosphorylation of STAT1, stimulating the JAK-STAT signaling pathway. In response to interferon-beta (IFN-beta) stimulation, stimulates the JAK-STAT signaling pathway. Acts as a negative regulator of 2-arachidonoylglycerol (2-AG)-mediated synaptic signaling via modulation of DAGLA activity. Functionally, has no kinase activity. The chain is Calcium/calmodulin-dependent protein kinase type II subunit alpha (Camk2a) from Mus musculus (Mouse).